The chain runs to 594 residues: KIF-binding protein (594 aa).

It belongs to the KIF-binding protein family.

The protein localises to the cytoplasm. It localises to the cytoskeleton. Functionally, activator of KIF1B plus-end-directed microtubule motor activity. Required for organization of axonal microtubules, and axonal outgrowth and maintenance during peripheral and central nervous system development. This Gallus gallus (Chicken) protein is KIF-binding protein (Kifbp).